Reading from the N-terminus, the 475-residue chain is UDP-N-acetylmuramate--L-alanine ligase (475 aa).

Residue 114-120 participates in ATP binding; the sequence is GTHGKTT.

It belongs to the MurCDEF family.

It is found in the cytoplasm. The catalysed reaction is UDP-N-acetyl-alpha-D-muramate + L-alanine + ATP = UDP-N-acetyl-alpha-D-muramoyl-L-alanine + ADP + phosphate + H(+). It participates in cell wall biogenesis; peptidoglycan biosynthesis. Functionally, cell wall formation. In Bartonella quintana (strain Toulouse) (Rochalimaea quintana), this protein is UDP-N-acetylmuramate--L-alanine ligase.